Reading from the N-terminus, the 208-residue chain is Small ribosomal subunit protein uS4 (208 aa).

The region spanning arginine 98–phenylalanine 161 is the S4 RNA-binding domain.

This sequence belongs to the universal ribosomal protein uS4 family. Part of the 30S ribosomal subunit. Contacts protein S5. The interaction surface between S4 and S5 is involved in control of translational fidelity.

Functionally, one of the primary rRNA binding proteins, it binds directly to 16S rRNA where it nucleates assembly of the body of the 30S subunit. Its function is as follows. With S5 and S12 plays an important role in translational accuracy. This Halothermothrix orenii (strain H 168 / OCM 544 / DSM 9562) protein is Small ribosomal subunit protein uS4.